Reading from the N-terminus, the 299-residue chain is Homoserine kinase (299 aa).

ATP is bound at residue 85-95 (PMSRGLGSSAT).

This sequence belongs to the GHMP kinase family. Homoserine kinase subfamily.

The protein localises to the cytoplasm. It catalyses the reaction L-homoserine + ATP = O-phospho-L-homoserine + ADP + H(+). Its pathway is amino-acid biosynthesis; L-threonine biosynthesis; L-threonine from L-aspartate: step 4/5. Catalyzes the ATP-dependent phosphorylation of L-homoserine to L-homoserine phosphate. The sequence is that of Homoserine kinase from Clostridium novyi (strain NT).